The sequence spans 419 residues: Acyl-[acyl-carrier-protein] hydrolase FATB1, chloroplastic (419 aa).

The transit peptide at Met1–Ala50 directs the protein to the chloroplast. Positions Met1–Ala84 are disordered. Residues Ser61–Ser78 show a composition bias toward polar residues. Residues Asn315, His317, and Cys352 contribute to the active site. The disordered stretch occupies residues Ser390–Ser419. A compositionally biased stretch (polar residues) spans Ala399 to Ser419.

It belongs to the acyl-ACP thioesterase family.

Its subcellular location is the plastid. The protein resides in the chloroplast. The catalysed reaction is octanoyl-[ACP] + H2O = octanoate + holo-[ACP] + H(+). The enzyme catalyses decanoyl-[ACP] + H2O = decanoate + holo-[ACP] + H(+). Plays an essential role in chain termination during de novo fatty acid synthesis. Possesses thioesterase activity for short chain acyl-ACPs. Substrate preference is 8:0 &gt; 10:0. The protein is Acyl-[acyl-carrier-protein] hydrolase FATB1, chloroplastic of Cuphea viscosissima (Blue waxweed).